A 453-amino-acid chain; its full sequence is GTPase Der (453 aa).

EngA-type G domains lie at 3–167 (FTLA…PAQT) and 187–360 (IKVA…AVWN). GTP contacts are provided by residues 9-16 (GRPNVGKS), 56-60 (DTAGL), 119-122 (NKSE), 193-200 (GRPNAGKS), 240-244 (DTAGL), and 305-308 (NKSD). The KH-like domain maps to 361-445 (TRIPTNPLNR…PIRLTLREKG (85 aa)).

Belongs to the TRAFAC class TrmE-Era-EngA-EngB-Septin-like GTPase superfamily. EngA (Der) GTPase family. In terms of assembly, associates with the 50S ribosomal subunit.

Functionally, GTPase that plays an essential role in the late steps of ribosome biogenesis. This is GTPase Der from Azorhizobium caulinodans (strain ATCC 43989 / DSM 5975 / JCM 20966 / LMG 6465 / NBRC 14845 / NCIMB 13405 / ORS 571).